We begin with the raw amino-acid sequence, 1898 residues long: 1-phosphatidylinositol 4,5-bisphosphate phosphodiesterase epsilon-1 (1898 aa).

The Ras-GEF domain occupies phenylalanine 66–lysine 328. Disordered stretches follow at residues glutamine 419–valine 444 and threonine 569–glycine 722. The segment covering threonine 569–serine 583 has biased composition (polar residues). A compositionally biased stretch (basic residues) spans serine 590 to glycine 605. 3 stretches are compositionally biased toward low complexity: residues proline 625 to glycine 637, tyrosine 666 to serine 687, and serine 701 to glycine 716. A PI-PLC X-box domain is found at glutamate 910–lysine 1058. Residues histidine 925 and histidine 970 contribute to the active site. 2 disordered regions span residues glutamine 1082–threonine 1178 and glutamate 1238–leucine 1274. Residues threonine 1098 to glutamate 1123 are compositionally biased toward acidic residues. The span at valine 1124–alanine 1144 shows a compositional bias: basic and acidic residues. A compositionally biased stretch (polar residues) spans asparagine 1146–serine 1155. Composition is skewed to low complexity over residues lysine 1163 to lysine 1172 and alanine 1242 to arginine 1253. One can recognise a PI-PLC Y-box domain in the interval alanine 1279–leucine 1385. Positions leucine 1391 to isoleucine 1517 constitute a C2 domain. The region spanning glutamine 1570 to serine 1665 is the Ras-associating 1 domain. The segment covering glycine 1680–threonine 1694 has biased composition (low complexity). Residues glycine 1680 to serine 1711 form a disordered region. In terms of domain architecture, Ras-associating 2 spans aspartate 1738–aspartate 1857.

As to quaternary structure, interacts (via Ras-associating domain 1) with let-60 (in GTP-bound form). Ca(2+) is required as a cofactor. As to expression, expressed in the spermatheca, vulva, intestine and excretory cells. Expressed in sensory neurons AWC, AFD, ASE, ASG and BAG, interneurons, ventral nerve cord neurons and tail neurons. Expressed in body muscles.

It carries out the reaction a 1,2-diacyl-sn-glycero-3-phospho-(1D-myo-inositol-4,5-bisphosphate) + H2O = 1D-myo-inositol 1,4,5-trisphosphate + a 1,2-diacyl-sn-glycerol + H(+). The production of the second messenger molecules diacylglycerol (DAG) and inositol 1,4,5-trisphosphate (IP3) is mediated by activated phosphatidylinositol-specific phospholipase C enzymes. plc-1 is a bifunctional enzyme which also regulates small GTPases of the Ras superfamily through its Ras guanine-exchange factor (RasGEF) activity. By activating IP3 receptor itr-1-mediated intracellular Ca(2+) release via the production of IP3, regulates ovulation by controlling contraction and/or dilation of the distal spermatheca valve during oocyte entry and the timing of the dilation of the spermatheca-uterine valve during oocyte exit. In a similar manner, plays an essential role in epidermal morphogenesis by regulating migration of epidermal cells during ventral closure and to a lesser extent by regulating epidermal cell dorsal intercalation. Involved in the immune response to S.aureus bacterium by activating kinase dkf-1 via the production of DAG which in turn activates transcription factor hlh-30. In ASER neurons, required for adjusting the orientation behavior in salt gradients based on the memory of previous salt concentration encountered. In Caenorhabditis elegans, this protein is 1-phosphatidylinositol 4,5-bisphosphate phosphodiesterase epsilon-1.